The chain runs to 551 residues: Formate--tetrahydrofolate ligase (551 aa).

An ATP-binding site is contributed by 65–72; that stretch reads TPAGEGKT.

It belongs to the formate--tetrahydrofolate ligase family.

It catalyses the reaction (6S)-5,6,7,8-tetrahydrofolate + formate + ATP = (6R)-10-formyltetrahydrofolate + ADP + phosphate. The protein operates within one-carbon metabolism; tetrahydrofolate interconversion. This is Formate--tetrahydrofolate ligase from Thermosipho melanesiensis (strain DSM 12029 / CIP 104789 / BI429).